The chain runs to 178 residues: Large ribosomal subunit protein uL6 (178 aa).

It belongs to the universal ribosomal protein uL6 family. In terms of assembly, part of the 50S ribosomal subunit.

This protein binds to the 23S rRNA, and is important in its secondary structure. It is located near the subunit interface in the base of the L7/L12 stalk, and near the tRNA binding site of the peptidyltransferase center. The sequence is that of Large ribosomal subunit protein uL6 from Leifsonia xyli subsp. xyli (strain CTCB07).